Consider the following 350-residue polypeptide: dTDP-D-glucose 4,6-dehydratase (350 aa).

Residue T142 coordinates substrate. The active-site Proton donor is D143. Catalysis depends on proton acceptor residues E144 and Y166.

The protein belongs to the NAD(P)-dependent epimerase/dehydratase family. dTDP-glucose dehydratase subfamily. NAD(+) is required as a cofactor.

It carries out the reaction dTDP-alpha-D-glucose = dTDP-4-dehydro-6-deoxy-alpha-D-glucose + H2O. The chain is dTDP-D-glucose 4,6-dehydratase (TGDS) from Homo sapiens (Human).